A 113-amino-acid polypeptide reads, in one-letter code: MSELIKVFKYDADGIFERDDLIVLEKGEKVPDGYTLIAPPVPSVNPVFNVKTQKWSAGEDASVMDPPPLSEIEKLTQDYADLMLYVAEVEQKTEQTQQDNANLLLSLAEAGVL.

This is an uncharacterized protein from Listeria innocua serovar 6a (strain ATCC BAA-680 / CLIP 11262).